Consider the following 193-residue polypeptide: Protein GrpE (193 aa).

Positions 1-26 (MTKKHHKEQEEIQETIKTEAAEENVG) are disordered. The span at 7–20 (KEQEEIQETIKTEA) shows a compositional bias: basic and acidic residues.

It belongs to the GrpE family. In terms of assembly, homodimer.

It is found in the cytoplasm. Its function is as follows. Participates actively in the response to hyperosmotic and heat shock by preventing the aggregation of stress-denatured proteins, in association with DnaK and GrpE. It is the nucleotide exchange factor for DnaK and may function as a thermosensor. Unfolded proteins bind initially to DnaJ; upon interaction with the DnaJ-bound protein, DnaK hydrolyzes its bound ATP, resulting in the formation of a stable complex. GrpE releases ADP from DnaK; ATP binding to DnaK triggers the release of the substrate protein, thus completing the reaction cycle. Several rounds of ATP-dependent interactions between DnaJ, DnaK and GrpE are required for fully efficient folding. The polypeptide is Protein GrpE (Chlorobaculum parvum (strain DSM 263 / NCIMB 8327) (Chlorobium vibrioforme subsp. thiosulfatophilum)).